The following is a 1117-amino-acid chain: Centrosomal protein of 126 kDa (1117 aa).

The tract at residues 1–42 (MLAGRPGTRSAVGELGTESSDNLDRAPLGPRESGGHHRPGSY) is disordered. The stretch at 49 to 121 (LEKNLEEERQ…EEVTEKFQRA (73 aa)) forms a coiled coil. 2 disordered regions span residues 643-664 (AENS…QQFH) and 730-759 (KKEE…IIRK). The span at 730-744 (KKEESKIPVHDDSKT) shows a compositional bias: basic and acidic residues. Residues 745–758 (KQGKPQRGRAKIIR) are compositionally biased toward basic residues.

As to quaternary structure, interacts with DCTN1. In terms of tissue distribution, expressed in brain, lung, skeletal muscle, kidney, pancreas, testis and ovary.

It is found in the midbody. It localises to the cytoplasm. The protein resides in the cytoskeleton. The protein localises to the microtubule organizing center. Its subcellular location is the centrosome. It is found in the cilium basal body. Its function is as follows. Participates in cytokinesis. Necessary for microtubules and mitotic spindle organization. Involved in primary cilium formation. The sequence is that of Centrosomal protein of 126 kDa from Homo sapiens (Human).